We begin with the raw amino-acid sequence, 234 residues long: Phosphoribosylformylglycinamidine synthase subunit PurQ (234 aa).

The Glutamine amidotransferase type-1 domain occupies 6-234 (VGVVVFPGSN…ESLFRSLTGV (229 aa)). Residue C89 is the Nucleophile of the active site. Active-site residues include H206 and E208.

In terms of assembly, part of the FGAM synthase complex composed of 1 PurL, 1 PurQ and 2 PurS subunits.

It is found in the cytoplasm. It catalyses the reaction N(2)-formyl-N(1)-(5-phospho-beta-D-ribosyl)glycinamide + L-glutamine + ATP + H2O = 2-formamido-N(1)-(5-O-phospho-beta-D-ribosyl)acetamidine + L-glutamate + ADP + phosphate + H(+). The catalysed reaction is L-glutamine + H2O = L-glutamate + NH4(+). It functions in the pathway purine metabolism; IMP biosynthesis via de novo pathway; 5-amino-1-(5-phospho-D-ribosyl)imidazole from N(2)-formyl-N(1)-(5-phospho-D-ribosyl)glycinamide: step 1/2. Part of the phosphoribosylformylglycinamidine synthase complex involved in the purines biosynthetic pathway. Catalyzes the ATP-dependent conversion of formylglycinamide ribonucleotide (FGAR) and glutamine to yield formylglycinamidine ribonucleotide (FGAM) and glutamate. The FGAM synthase complex is composed of three subunits. PurQ produces an ammonia molecule by converting glutamine to glutamate. PurL transfers the ammonia molecule to FGAR to form FGAM in an ATP-dependent manner. PurS interacts with PurQ and PurL and is thought to assist in the transfer of the ammonia molecule from PurQ to PurL. This is Phosphoribosylformylglycinamidine synthase subunit PurQ from Chlorobium chlorochromatii (strain CaD3).